Consider the following 269-residue polypeptide: Histone deacetylase HDT1 (269 aa).

Residues 97–269 are disordered; the sequence is PFEEEEDDED…HSKAKHSAGK (173 aa). 2 stretches are compositionally biased toward acidic residues: residues 98 to 115 and 153 to 179; these read FEEEEDDEDDYDESDEDI and KDDEDESSDDDDSDMGEDEDDSDDSEE. A compositionally biased stretch (polar residues) spans 228–238; sequence PSKQASKTPKS. Residues 242–265 form a C2H2-type zinc finger; it reads HHCKPCNRSFGSEGALDSHSKAKH.

It belongs to the histone deacetylase HD2 family. In terms of tissue distribution, predominantly expressed in ovaries. Accumulates predominantly in the micropylar region of the ovule's integument.

The protein resides in the nucleus. It localises to the nucleolus. Mediates the deacetylation of lysine residues on the N-terminal part of the core histones (H2A, H2B, H3 and H4). Histone deacetylation gives a tag for epigenetic repression and plays an important role in transcriptional regulation, cell cycle progression and developmental events. This Solanum chacoense (Chaco potato) protein is Histone deacetylase HDT1 (HDT1).